A 714-amino-acid chain; its full sequence is Methyl-accepting chemotaxis protein TlpQ (714 aa).

Residues 12–32 form a helical membrane-spanning segment; that stretch reads ITLLAGLCLLGVVALLVGLSV. In terms of domain architecture, Cache spans 50-290; it reads LDESARLRLE…LLGKNLAKAD (241 aa). Histamine contacts are provided by residues Glu170, 208–210, and Asp239; that span reads YFD. A helical transmembrane segment spans residues 360-380; that stretch reads TWVELGLGLGAAVLGLLVLWL. An HAMP domain is found at 383–437; the sequence is RGVTRPILGVAHMLRDIASGEGDLTQRLPHTGRDELGELAGWFNRFLDKLQPIIR. Residues 442–678 enclose the Methyl-accepting transducer domain; sequence SVRDARSTAD…EINRNVAAIR (237 aa).

The protein belongs to the methyl-accepting chemotaxis (MCP) protein family. Homotetramer.

The protein localises to the cell membrane. Its function is as follows. Chemotactic-signal transducers respond to changes in the concentration of attractants and repellents in the environment, transduce a signal from the outside to the inside of the cell, and facilitate sensory adaptation through the variation of the level of methylation. TlpQ is a chemoreceptor that binds and mediates chemotaxis to histamine, a key biological signaling molecule. It binds histamine with high affinity, which permits responses to very low histamine concentrations. Chemotaxis to histamine may play a role in the virulence of P.aeruginosa by recruiting cells at the infection site and consequently modulating the expression of quorum-sensing-dependent virulence genes. TlpQ also binds and mediates chemotaxis to polyamines such as putrescine, spermidine, cadaverine, agmatine and ethylenediamine. In addition, binds the quorum-sensing signal autoinducer 2 (AI-2), thus inducing chemotaxis toward AI-2 and biofilm formation. The sequence is that of Methyl-accepting chemotaxis protein TlpQ from Pseudomonas aeruginosa (strain ATCC 15692 / DSM 22644 / CIP 104116 / JCM 14847 / LMG 12228 / 1C / PRS 101 / PAO1).